The primary structure comprises 265 residues: Phosphonates import ATP-binding protein PhnC 1 (265 aa).

Residues 3 to 247 (LRLSAIDLRH…HLDTLYANEQ (245 aa)) enclose the ABC transporter domain. ATP is bound at residue 36-43 (GPSGAGKT).

Belongs to the ABC transporter superfamily. Phosphonates importer (TC 3.A.1.9.1) family. As to quaternary structure, the complex is composed of two ATP-binding proteins (PhnC), two transmembrane proteins (PhnE) and a solute-binding protein (PhnD).

The protein resides in the cell inner membrane. It catalyses the reaction phosphonate(out) + ATP + H2O = phosphonate(in) + ADP + phosphate + H(+). Part of the ABC transporter complex PhnCDE involved in phosphonates import. Responsible for energy coupling to the transport system. The polypeptide is Phosphonates import ATP-binding protein PhnC 1 (Pseudomonas syringae pv. tomato (strain ATCC BAA-871 / DC3000)).